A 680-amino-acid chain; its full sequence is Lipase 1 (680 aa).

Residues 1–34 form the signal peptide; that stretch reads MKSQNKYSIRKFSVGASSILIATLLFLSGGQAQA. Residues 35 to 290 constitute a propeptide that is removed on maturation; it reads AEKQVNMGNS…AKAKDDQTNK (256 aa). A disordered region spans residues 82 to 259; that stretch reads KNLHNDKTIS…PTKDNDKKNG (178 aa). A compositionally biased stretch (basic and acidic residues) spans 84-112; it reads LHNDKTISEENHRKTDDLNKDQLKDDKKS. The span at 125–138 shows a compositional bias: polar residues; sequence KNNNANPSDVNQGL. The span at 148 to 170 shows a compositional bias: low complexity; sequence SKVASQQQSKEADNSQDSNANNN. The segment covering 204–223 has biased composition (polar residues); the sequence is QPQQNNQANDKITNYNFNNE. Residues 224–234 show a composition bias toward basic and acidic residues; that stretch reads QEVKPQKDEKT. Polar residues predominate over residues 235–246; sequence LSVSDLKNNQKS. S408 functions as the Nucleophile in the catalytic mechanism. Catalysis depends on D600, which acts as the Charge relay system. D638 contributes to the Ca(2+) binding site. H639 serves as the catalytic Charge relay system. Residues D641, D646, and D649 each contribute to the Ca(2+) site.

It belongs to the AB hydrolase superfamily. Lipase family.

It is found in the secreted. It catalyses the reaction a triacylglycerol + H2O = a diacylglycerol + a fatty acid + H(+). This Staphylococcus aureus (strain MSSA476) protein is Lipase 1 (lip1).